Here is a 253-residue protein sequence, read N- to C-terminus: uncharacterized protein (253 aa).

The segment covering 1–14 (MKVPILSRLRSLSS) has biased composition (low complexity). Disordered stretches follow at residues 1 to 192 (MKVP…PKSS) and 212 to 253 (PETV…AIQL). 2 stretches are compositionally biased toward basic and acidic residues: residues 17 to 30 (RNNE…EHQV) and 45 to 60 (KSDK…KSGE). Composition is skewed to low complexity over residues 63–104 (PSTP…GSDS) and 111–154 (KTLS…QTPR). The span at 215-235 (VVTSTPRQQSRPPSAQNTPNF) shows a compositional bias: polar residues. Residues 236–253 (TSQGGSRSTSRRQSAIQL) show a composition bias toward low complexity.

This is an uncharacterized protein from Dictyostelium discoideum (Social amoeba).